The sequence spans 347 residues: D-fructose 1,6-bisphosphatase class 2/sedoheptulose 1,7-bisphosphatase (347 aa).

Residues aspartate 33, glutamate 57, aspartate 97, and glutamate 100 each coordinate Mn(2+). Residues 100–102, tyrosine 131, 176–178, and 198–200 each bind substrate; these read EGT, RDR, and DGD. Residue glutamate 225 coordinates Mn(2+).

It belongs to the FBPase class 2 family. Homotetramer. It depends on Mn(2+) as a cofactor.

The catalysed reaction is beta-D-fructose 1,6-bisphosphate + H2O = beta-D-fructose 6-phosphate + phosphate. The enzyme catalyses D-sedoheptulose 1,7-bisphosphate + H2O = D-sedoheptulose 7-phosphate + phosphate. The protein operates within carbohydrate biosynthesis; Calvin cycle. Functionally, catalyzes the hydrolysis of fructose 1,6-bisphosphate (Fru 1,6-P2) and sedoheptulose 1,7-bisphosphate (Sed 1,7-P2) to fructose 6-phosphate and sedoheptulose 7-phosphate, respectively. The polypeptide is D-fructose 1,6-bisphosphatase class 2/sedoheptulose 1,7-bisphosphatase (Thermosynechococcus vestitus (strain NIES-2133 / IAM M-273 / BP-1)).